A 178-amino-acid chain; its full sequence is CASP-like protein 5B1 (178 aa).

Over M1–T37 the chain is Cytoplasmic. The chain crosses the membrane as a helical span at residues I38–M58. Residues V59–A69 lie on the Extracellular side of the membrane. N66 is a glycosylation site (N-linked (GlcNAc...) asparagine). The chain crosses the membrane as a helical span at residues F70 to L90. Residues D91–S104 lie on the Cytoplasmic side of the membrane. A helical transmembrane segment spans residues V105–A125. Topologically, residues C126–A154 are extracellular. The helical transmembrane segment at A155 to W175 threads the bilayer. At A176–E178 the chain is on the cytoplasmic side.

It belongs to the Casparian strip membrane proteins (CASP) family. In terms of assembly, homodimer and heterodimers.

It is found in the cell membrane. This Ginkgo biloba (Ginkgo) protein is CASP-like protein 5B1.